A 295-amino-acid chain; its full sequence is MPALRDFRRRIKSVKSTQKICKAMKAVATAKMARAQATVVAARPYARQLHEVLGRVASAARDVQNPLLTVREPKRVCYIVITADRGLCGGFNSNILRTAVKELSKWEEFKLVAVGRKCRNFFRFRDWERDAEFIGLGENIRFEQGQQIARFVINKYIAGEYDAVYMVYSKFVNMLVQQPTVVKLLPVEPPAEEAAEKAGGEEAAAPKKATVDYIFEPSAADVLDYLLPRYVENSVYHGLIESKASEQSARMMAMDAATKNAGEMIDRLTLQMNRLRQEGITKELLDIVGGAAALE.

The protein belongs to the ATPase gamma chain family. F-type ATPases have 2 components, CF(1) - the catalytic core - and CF(0) - the membrane proton channel. CF(1) has five subunits: alpha(3), beta(3), gamma(1), delta(1), epsilon(1). CF(0) has three main subunits: a, b and c.

Its subcellular location is the cell membrane. Its function is as follows. Produces ATP from ADP in the presence of a proton gradient across the membrane. The gamma chain is believed to be important in regulating ATPase activity and the flow of protons through the CF(0) complex. This Desulforudis audaxviator (strain MP104C) protein is ATP synthase gamma chain.